The sequence spans 454 residues: G-protein coupled receptor 39 (454 aa).

Residues 1–34 (MASPSHPSRDCSQVIDHSHVPEFEVATWIKITLI) are Extracellular-facing. 2 disulfide bridges follow: cysteine 11-cysteine 191 and cysteine 108-cysteine 210. Histidine 17 and histidine 19 together coordinate Zn(2+). Residues 35-55 (LVYLVIFVVGILGNSVTIRVT) form a helical membrane-spanning segment. Residues 56 to 69 (QVLQKKGYLQKEVT) lie on the Cytoplasmic side of the membrane. Residues 70 to 89 (DHMVSLACSDILVFLIGMPM) form a helical membrane-spanning segment. Topologically, residues 90-109 (EFYSIIWNPLTTPSYTVSCK) are extracellular. Residues 110–131 (VHTFLFEACSYATLLHVLTLSF) traverse the membrane as a helical segment. Over 132-151 (ERYIAICHPFRYKAMSGPCQ) the chain is Cytoplasmic. Residues 152 to 172 (VKLLIGFVWVTSALVALPLLF) form a helical membrane-spanning segment. The Extracellular portion of the chain corresponds to 173–217 (AMGVEYPLVNVPSHRGLICNRSRTRHQEQPESSNMSICTNLSSRW). N-linked (GlcNAc...) asparagine glycosylation is found at asparagine 192, asparagine 206, and asparagine 212. Residues 218-242 (TVFQSSIFSAFVVYLVVLVSVAFMC) form a helical membrane-spanning segment. Topologically, residues 243-283 (WSMMQVLRRSKQGTLAAQGQQLQLRKLESQESRSARRQTII) are cytoplasmic. A helical transmembrane segment spans residues 284–305 (FLELIVVTLAVCWMPNQVRRIM). At 306-323 (AAAKPKHDWTKSYFRAYM) the chain is on the extracellular side. A helical membrane pass occupies residues 324 to 344 (ILLPFSDTFFYLSSVVNPLLY). The Cytoplasmic segment spans residues 345-454 (NVSSQQFRSV…TRNGFQEHEV (110 aa)). Serine 397 bears the Phosphoserine mark. The tract at residues 415–454 (HSEAKPESKPQELSCESPEPNSERKPANPATRNGFQEHEV) is disordered.

The protein belongs to the G-protein coupled receptor 1 family. Interacts with HTR1A. Interacts with GALR1. As to expression, detected in liver, kidney, abomasum, uterus, small intestine and colon.

The protein resides in the cell membrane. In terms of biological role, zinc-sensing receptor that can sense changes in extracellular Zn(2+), mediate Zn(2+) signal transmission, and participates in the regulation of numerous physiological processes including glucose homeostasis regulation, gastrointestinal mobility, hormone secretion and cell death. Activation by Zn(2+) in keratinocytes increases the intracellular concentration of Ca(2+) and activates the ERK/MAPK and PI3K/AKT signaling pathways leading to epithelial repair. Plays an essential role in normal wound healing by inducing the production of cytokines including the major inflammatory cytokine IL6 via the PKC/MAPK/CEBPB pathway. Regulates adipose tissue metabolism, especially lipolysis, and regulates the function of lipases, such as hormone-sensitive lipase and adipose triglyceride lipase. Plays a role in the inhibition of cell death and protects against oxidative, endoplasmic reticulum and mitochondrial stress by inducing secretion of the cytoprotective pigment epithelium-derived growth factor (PEDF) and probably other protective transcripts in a GNA13/RHOA/SRE-dependent manner. Forms dynamic heteroreceptor complexes with HTR1A and GALR1 depending on cell type or specific physiological states, resulting in signaling diversity: HTR1A-GPR39 shows additive increase in signaling along the serum response element (SRE) and NF-kappa-B pathways while GALR1 acts as an antagonist blocking SRE. In Bos taurus (Bovine), this protein is G-protein coupled receptor 39 (GPR39).